The sequence spans 104 residues: Urease subunit beta (104 aa).

It belongs to the urease beta subunit family. In terms of assembly, heterotrimer of UreA (gamma), UreB (beta) and UreC (alpha) subunits. Three heterotrimers associate to form the active enzyme.

The protein resides in the cytoplasm. It catalyses the reaction urea + 2 H2O + H(+) = hydrogencarbonate + 2 NH4(+). It participates in nitrogen metabolism; urea degradation; CO(2) and NH(3) from urea (urease route): step 1/1. The chain is Urease subunit beta from Mycolicibacterium vanbaalenii (strain DSM 7251 / JCM 13017 / BCRC 16820 / KCTC 9966 / NRRL B-24157 / PYR-1) (Mycobacterium vanbaalenii).